The sequence spans 190 residues: 7-methyl-GTP pyrophosphatase (190 aa).

The Proton acceptor role is filled by aspartate 69.

Belongs to the Maf family. YceF subfamily. It depends on a divalent metal cation as a cofactor.

Its subcellular location is the cytoplasm. The enzyme catalyses N(7)-methyl-GTP + H2O = N(7)-methyl-GMP + diphosphate + H(+). Its function is as follows. Nucleoside triphosphate pyrophosphatase that hydrolyzes 7-methyl-GTP (m(7)GTP). May have a dual role in cell division arrest and in preventing the incorporation of modified nucleotides into cellular nucleic acids. The polypeptide is 7-methyl-GTP pyrophosphatase (Xanthomonas oryzae pv. oryzae (strain MAFF 311018)).